Reading from the N-terminus, the 341-residue chain is ATPase GET3 (341 aa).

Position 34 to 41 (34 to 41 (KGGVGKTT)) interacts with ATP. The active site involves D63. ATP is bound by residues E245 and N272. Residues C283 and C286 each coordinate Zn(2+).

It belongs to the arsA ATPase family. As to quaternary structure, homodimer.

The protein resides in the cytoplasm. It is found in the endoplasmic reticulum. In terms of biological role, ATPase required for the post-translational delivery of tail-anchored (TA) proteins to the endoplasmic reticulum. Recognizes and selectively binds the transmembrane domain of TA proteins in the cytosol. This complex then targets to the endoplasmic reticulum by membrane-bound receptors, where the tail-anchored protein is released for insertion. This process is regulated by ATP binding and hydrolysis. ATP binding drives the homodimer towards the closed dimer state, facilitating recognition of newly synthesized TA membrane proteins. ATP hydrolysis is required for insertion. Subsequently, the homodimer reverts towards the open dimer state, lowering its affinity for the membrane-bound receptor, and returning it to the cytosol to initiate a new round of targeting. The chain is ATPase GET3 from Ajellomyces capsulatus (strain H143) (Darling's disease fungus).